The primary structure comprises 195 residues: uncharacterized protein (195 aa).

A signal peptide spans 1 to 21 (MHFSSCVLVSALAIVTNVATA). N-linked (GlcNAc...) asparagine glycans are attached at residues N62 and N109. Positions 119–141 (DWDEDTVTGENAPDSGEPFSTSH) are disordered.

Its subcellular location is the secreted. This is an uncharacterized protein from Arthroderma benhamiae (strain ATCC MYA-4681 / CBS 112371) (Trichophyton mentagrophytes).